Reading from the N-terminus, the 1116-residue chain is MESVHIHVHSEYTLLSSMCRIPALVEKAKAAQFSALALTDRHVMYGAVPFYKACKESGLKPIIGMETTVRFAEDRESDLLLYARSNKGYEHLLKLSTIIQCREEKEKYVTWEELLAYKDDLLYVIPYSGGFVRACLEDEALERGERFIQFLKDHLGGESVYLEIQGTDRSKVEPINQLAAKLAIPLVCSQHIQVLEREDLDAWKVIQAIREGVLVEELRIEQEEDVCFFTLTEMEQTFRAYPEALQNTKKLADRCHVELTLGKPRLPKFQTPNEQSAEDYLRKLCEQGAKERYGEEWTKEKAQRLGEELAVIERMGFSDYFLIVWDFMRFAREASIVTGPGRGSVAGSLVAYVLFITDVDPLHYDLLFERFLNPERISLPDIDLDFPDHRREEVIVYVKKKYGANRVAQILTFGTLAARASVRDVGKALAIPPNVIEKISKEISGRPGMTLVKAYNENERLRQLVHASDEAQKVMKLARKVEGLPRHTSTHAAGVVISEQPLTEVIALQHGQGEVPLTQGTMETVEDVGLIKMDFLGLRNLTLLEMVVKRVRETYGHSLNVKQLPLNDAKTFALLAKGETTGVFQLESGGMRKVLRELKPNTFADIVAVNALYRPGPMEFIPDYIQGKEGTKEITYLHPDLEPILSSTYGVIVYQEQIMQIAAKMAGFSLGEADLLRRAISKKKGEALRQQEEAFVTGAVRQGYEQETAKKIYELIVRFANYGFNKSHAVAYSMLAYQLAYLKAHYPSSFYAALASTIWNQPEKLERLLQEMKQQGIRVLPPSLSKSDIHFSEEEEGVRFPLLPLRYVSVRAIRELIKARREAPVRSLFDLCSRVDGRIVTSRVMESLIKAGALDELGERATLLANIEEAFQFAEQVKEFQENTGGLFQLSVEEPEYIKVEPLTDLEKLAYEKEAVGFYLSGHPLLAYTESLRQYDRLTYLEGTERRFVKLAGMIHRIRRIRTKRGEVMGFLTMSDETGEWEAVVFPAVWAMYEWGLKEGELYFVEGKMDRGRSEELQLLVDKVLPLKHMLKKEKEKLFLKITADVEKEVERLNDIRRLLQVHHGPTPVVMYYEKQRKTIQLPEKYHVSLSFTLLHELEQLVGKEHVVVSTYEDES.

This sequence belongs to the DNA polymerase type-C family. DnaE subfamily. In terms of assembly, DNA polymerase III contains a core (composed of alpha, epsilon and theta chains) that associates with a tau subunit. This core dimerizes to form the PolIII' complex. PolIII' associates with the gamma complex (composed of gamma, delta, delta', psi and chi chains) and with the beta chain to form the complete DNA polymerase III complex.

It localises to the cytoplasm. The enzyme catalyses DNA(n) + a 2'-deoxyribonucleoside 5'-triphosphate = DNA(n+1) + diphosphate. In terms of biological role, DNA polymerase III is a complex, multichain enzyme responsible for most of the replicative synthesis in bacteria. This DNA polymerase also exhibits 3' to 5' exonuclease activity. The alpha chain is the DNA polymerase. This is DNA polymerase III subunit alpha (dnaE) from Halalkalibacterium halodurans (strain ATCC BAA-125 / DSM 18197 / FERM 7344 / JCM 9153 / C-125) (Bacillus halodurans).